A 456-amino-acid polypeptide reads, in one-letter code: CBL-interacting serine/threonine-protein kinase 2 (456 aa).

The region spanning 12 to 266 (YEVGRLLGQG…IAKIKESSWF (255 aa)) is the Protein kinase domain. ATP contacts are provided by residues 18-26 (LGQGTFAKV) and lysine 41. Aspartate 134 functions as the Proton acceptor in the catalytic mechanism. Residues 152–181 (DFGLSALADCKRQDGLLHTTCGTPAYVAPE) form an activation loop region. Residue serine 156 is modified to Phosphoserine. Phosphothreonine is present on threonine 170. A disordered region spans residues 280-309 (MEKQQVREATNPMEAGGSGQNENGENHEPP). The region spanning 309-333 (PRLATLNAFDIIALSTGFGLAGLFG) is the NAF domain. Residues 338 to 367 (KRESRFASQKPASEIISKLVEVAKCLKLKI) are PPI.

The protein belongs to the protein kinase superfamily. CAMK Ser/Thr protein kinase family. SNF1 subfamily. As to quaternary structure, interacts with CBL2, CBL3 and CBL5. Requires Mn(2+) as cofactor.

It carries out the reaction L-seryl-[protein] + ATP = O-phospho-L-seryl-[protein] + ADP + H(+). It catalyses the reaction L-threonyl-[protein] + ATP = O-phospho-L-threonyl-[protein] + ADP + H(+). Functionally, CIPK serine-threonine protein kinases interact with CBL proteins. Binding of a CBL protein to the regulatory NAF domain of CIPK protein lead to the activation of the kinase in a calcium-dependent manner. The chain is CBL-interacting serine/threonine-protein kinase 2 (CIPK2) from Arabidopsis thaliana (Mouse-ear cress).